The primary structure comprises 281 residues: Small ribosomal subunit protein uS2 (281 aa).

Residues 225 to 281 (LMERKAEKPEEEETEEAAPRRERRARSGARRSRQNENEATAEAATEVAEAPEAEEAE) form a disordered region. Positions 245-256 (RERRARSGARRS) are enriched in basic residues. Low complexity predominate over residues 262 to 272 (EATAEAATEVA).

It belongs to the universal ribosomal protein uS2 family.

This chain is Small ribosomal subunit protein uS2, found in Porphyromonas gingivalis (strain ATCC 33277 / DSM 20709 / CIP 103683 / JCM 12257 / NCTC 11834 / 2561).